The following is a 584-amino-acid chain: Keratin, type I cytoskeletal 10 (584 aa).

Residues M1 to R15 show a composition bias toward low complexity. Residues M1 to G24 form a disordered region. Positions M1–N145 are head. 6 positions are modified to phosphoserine: S14, S16, S42, S53, S56, and S170. A coil 1A region spans residues E146–W181. Positions E146 to G460 constitute an IF rod domain. The tract at residues Y182–T202 is linker 1. The segment at I203 to L294 is coil 1B. Residues R295–L317 form a linker 12 region. The interval L318–E456 is coil 2. A disordered region spans residues L453 to Y584. The span at G457–S563 shows a compositional bias: gly residues. The interval G457 to Y584 is tail. The segment covering G564–Y584 has biased composition (low complexity).

The protein belongs to the intermediate filament family. As to quaternary structure, heterotetramer of two type I and two type II keratins. Heterodimer with KRT1. Two heterodimers of KRT1 and KRT10 form a heterotetramer. The KRT10 subunit in the heterotetramer is probably disulfide-linked. Interacts with PLEC isoform 1C, when in a heterodimer with KRT1. In terms of assembly, (Microbial infection) Interacts (via C-terminal tail domain) with the S.aureus clumping factor, clfB; this interaction probably mediates S.aureus attachment to the keratinized squamous epithelial cells from the nasal cavity. (Microbial infection) Interacts (via the C-terminal tail domain) with S.pneumoniae serine-rich repeat protein PsrP; this interaction probably mediates S.pneumoniae adherence to lung tissue and subsequent pathogenesis. Neither protein has to be glycosylated for the interaction to occur. As to expression, seen in all suprabasal cell layers including stratum corneum. Expressed on the surface of lung cell lines. Localized on the surface of desquamated nasal epithelial cells (at protein level).

It localises to the secreted. The protein localises to the extracellular space. It is found in the cell surface. The protein resides in the cytoplasm. Its function is as follows. Plays a role in the establishment of the epidermal barrier on plantar skin. Involved in the maintenance of cell layer development and keratin filament bundles in suprabasal cells of the epithelium. In terms of biological role, (Microbial infection) Acts as a mediator of S.aureus adherence to desquamated nasal epithelial cells via clfB, and hence may play a role in nasal colonization. Functionally, (Microbial infection) Binds S.pneumoniae PsrP, mediating adherence of the bacteria to lung cell lines. Reduction of levels of KRT10 keratin decrease adherence, overexpression increases adherence. Neither protein has to be glycosylated for the interaction to occur. The protein is Keratin, type I cytoskeletal 10 (KRT10) of Homo sapiens (Human).